A 505-amino-acid polypeptide reads, in one-letter code: Cell division control protein 6 homolog B (505 aa).

A disordered region spans residues 37-72; sequence KRKMRSDSAAVSGNSVSTPKKLKSHLPSSVPNPGMS. Positions 45 to 54 are enriched in polar residues; sequence AAVSGNSVST.

This sequence belongs to the CDC6/cdc18 family.

It is found in the nucleus. Its function is as follows. May be involved in the initiation of DNA replication. In Arabidopsis thaliana (Mouse-ear cress), this protein is Cell division control protein 6 homolog B.